A 621-amino-acid polypeptide reads, in one-letter code: MFDQLAVFTPQGQVLYQYNCLGKKFSEIQINSFISQLITSPVTRKESVANANTDGFDFNLLTINSEHKNSPSFNALFYLNKQPELYFVVTFAEQTLELNQETQQTLALVLKLWNSLHLSESILKNRQGQNEKNKHNYVDILQGIEDDLKKFEQYFRIKYEESIKQDHINPDNFTKNGSVPQSHNKNTKKKLRDTKGKKQSTGNVGSGRKWGRDGGMLDEMNHEDAAKLDFSSSNSHNSSQVALDSTINKDSFGDRTEGGDFLIKEIDDLLSSHKDEITSGNEAKNSGYVSTAFGFLQKHVLGNKTINESDLKSVLEKLTQQLITKNVAPEAADYLTQQVSHDLVGSKTANWTSVENTARESLTKALTQILTPGVSVDLLREIQSKRSKKDEEGKCDPYVFSIVGVNGVGKSTNLSKLAFWLLQNNFKVLIVACDTFRSGAVEQLRVHVENLAQLMDDSHVRGSKNKRGKTGNDYVELFEAGYGGSDLVTKIAKQAIKYSRDQNFDIVLMDTAGRRHNDPTLMSPLKSFADQAKPDKIIMVGEALVGTDSVQQAKNFNDAFGKGRNLDFFIISKCDTVGEMLGTMVNMVYATGIPILFVGVGQTYTDLRTLSVKWAVNTLMS.

Residues 1 to 158 (MFDQLAVFTP…KKFEQYFRIK (158 aa)) are SRX. Residues 167 to 217 (HINPDNFTKNGSVPQSHNKNTKKKLRDTKGKKQSTGNVGSGRKWGRDGGML) are disordered. Residues 171 to 183 (DNFTKNGSVPQSH) show a composition bias toward polar residues. A compositionally biased stretch (basic residues) spans 185–198 (KNTKKKLRDTKGKK). Serine 239 is modified (phosphoserine). Residues 398–620 (YVFSIVGVNG…SVKWAVNTLM (223 aa)) form an NG domain region. Residues 404-411 (GVNGVGKS) and 510-514 (DTAGR) contribute to the GTP site. At serine 523 the chain carries Phosphoserine. A GTP-binding site is contributed by 572-575 (SKCD).

This sequence belongs to the GTP-binding SRP family. Heterodimer of an alpha and a beta chain.

It is found in the endoplasmic reticulum membrane. Its function is as follows. Component of the SRP (signal recognition particle) receptor (SR). Ensures, in conjunction with the signal recognition particle, the correct targeting of the nascent secretory proteins to the endoplasmic reticulum membrane system. GTP hydrolysis may enhance the fidelity of and provide unidirectionality to the targeting reaction. It is important but not essential for cell growth. May be directly involved in mitochondrial protein import. The sequence is that of Signal recognition particle receptor subunit alpha homolog (SRP101) from Saccharomyces cerevisiae (strain ATCC 204508 / S288c) (Baker's yeast).